Reading from the N-terminus, the 457-residue chain is MDIIIKNGTIVTADGISPADLGIKDGKIAQIGGTFGPAGRTIDASGRYVFPGGIDVHTHVETVSFNTQSADTFATATVAAACGGTTTIVDFCQQDRGHSLREAVAKWDGMAGGKSAIDYGYHIIVLDPTDSVIEELEVLPDLGITSFKVFMAYRGMNMIDDVTLLRTLDKAAKTGSLVMVHAENGDAADYLRDKFVADGKTAPIYHALSRPPRVEAEATARALALAEIVNAPIYIVHLTCEESFDELMRAKARGVHALAETCTQYLYLTKDDLERPDFEGAKYVFTPPPRTKKDQEILWNALRNGVLETVSSDHCSWLFEGHKDRGRNDFRAIPNGAPGVEERLMMVYQGVNEGRISLTQFVELVATRPAKVFGMFPEKGTVAVGSDADIVLWDPEAEMVIEQSAMHNAMDYSSYEGHKIKGVPKTVLLRGKVIVDEGTYVGAPTDGQFRKRRKYKQ.

Zn(2+)-binding residues include His57 and His59. Ser69 carries the post-translational modification Phosphoserine. Lys148 provides a ligand contact to Zn(2+). Lys148 carries the post-translational modification N6-carboxylysine. A substrate-binding site is contributed by Tyr153. His181 and His237 together coordinate Zn(2+). Thr286 is a substrate binding site. Zn(2+) is bound at residue Asp313. Asn335 provides a ligand contact to substrate.

It belongs to the metallo-dependent hydrolases superfamily. Hydantoinase/dihydropyrimidinase family. In terms of assembly, homotetramer. Requires Zn(2+) as cofactor. In terms of processing, carboxylation allows a single lysine to coordinate two zinc ions.

Catalyzes the stereospecific hydrolysis of the cyclic amide bond of D-hydantoin derivatives. This is D-hydantoinase (hyuA) from Rhizobium radiobacter (Agrobacterium tumefaciens).